A 433-amino-acid chain; its full sequence is Enolase (433 aa).

Q166 is a binding site for (2R)-2-phosphoglycerate. The active-site Proton donor is the E208. D245, E290, and D317 together coordinate Mg(2+). 4 residues coordinate (2R)-2-phosphoglycerate: K342, R371, S372, and K393. Residue K342 is the Proton acceptor of the active site.

The protein belongs to the enolase family. The cofactor is Mg(2+).

It is found in the cytoplasm. Its subcellular location is the secreted. It localises to the cell surface. It carries out the reaction (2R)-2-phosphoglycerate = phosphoenolpyruvate + H2O. It participates in carbohydrate degradation; glycolysis; pyruvate from D-glyceraldehyde 3-phosphate: step 4/5. Catalyzes the reversible conversion of 2-phosphoglycerate (2-PG) into phosphoenolpyruvate (PEP). It is essential for the degradation of carbohydrates via glycolysis. This Clostridium novyi (strain NT) protein is Enolase.